The following is a 264-amino-acid chain: Apolipoprotein A-I (264 aa).

The first 18 residues, 1–18, serve as a signal peptide directing secretion; sequence MKAVVLAVAVLFLTGSQA. 2 repeat units span residues 67–88 and 89–110. Residues 67-264 form a 10 X approximate tandem repeats region; sequence LKLVDNWDTV…DETSKRLSTQ (198 aa). M109 bears the Methionine sulfoxide mark. A 3; half-length repeat occupies 111–121; it reads KDLEEVKKQVQ. 3 consecutive repeat copies span residues 122-143, 144-165, and 166-187. The 7; truncated repeat unit spans residues 188-207; that stretch reads PYSDKMRERLAQHLAKLKDS. Residue M193 is modified to Methionine sulfoxide. Residues 208 to 229 form repeat 8; the sequence is TTLAEYRTKASNHLQTLSEKAK. Residues 230-240 form a 9; half-length repeat; that stretch reads PALEDLRQGLT. Repeat unit 10 spans residues 241 to 264; sequence PMLESFRATIMGWIDETSKRLSTQ. At M242 the chain carries Methionine sulfoxide.

The protein belongs to the apolipoprotein A1/A4/E family. As to quaternary structure, homodimer. Interacts with APOA1BP and CLU. Component of a sperm activating protein complex (SPAP), consisting of APOA1, an immunoglobulin heavy chain, an immunoglobulin light chain and albumin. Interacts with NDRG1. Interacts with SCGB3A2. Interacts with NAXE and YJEFN3. Glycosylated. Post-translationally, palmitoylated. In terms of processing, phosphorylation sites are present in the extracellular medium.

The protein localises to the secreted. Its function is as follows. Participates in the reverse transport of cholesterol from tissues to the liver for excretion by promoting cholesterol efflux from tissues and by acting as a cofactor for the lecithin cholesterol acyltransferase (LCAT). As part of the SPAP complex, activates spermatozoa motility. This Peromyscus maniculatus bairdii (Prairie deer mouse) protein is Apolipoprotein A-I (Apoa1).